The sequence spans 438 residues: MNIKSAEFVDRVKIFVKAGDGGNGCVSFRREKYVPKGGPDGGDGGDGGFVFLRANPSLSTLIEFVNKRKFFAENGKHGMGKKMKGRNGRDLYIDVPVGTVVKDASTGQIIADLDEPGKVVCVARGGRGGRGNAHFSTPTRQAPLIAEKGEKGEARWLELELKILADVGLVGYPNVGKSSLIARISNARPKIANYPFTTLVPNLGVVKYGDFSFVVADIPGLIEGASEGVGLGNVFLRHVERCFVIVHMLDVSGFEREDPARDYFIIREEMKKYSPFLLEKPEIVVANKIDLLEREKLPQRIKEIESSIGKEVIPISAVTGEGVDLLLDRVASIVRKERIEREERKEKKDHPMEKPAPVWRKLPERFEVEVVKEEDGQWVVEGEGLRVWMERFDLNQRDARLLILQILEKNGLEEKLKEAGVKEGDVVRIGNFEFEYRE.

An Obg domain is found at 6–164 (AEFVDRVKIF…RWLELELKIL (159 aa)). The OBG-type G domain occupies 165–335 (ADVGLVGYPN…LLDRVASIVR (171 aa)). GTP is bound by residues 171-178 (GYPNVGKS), 196-200 (FTTLV), 217-220 (DIPG), 287-290 (NKID), and 316-318 (SAV). The Mg(2+) site is built by Ser-178 and Thr-198. The region spanning 358–438 (VWRKLPERFE…IGNFEFEYRE (81 aa)) is the OCT domain.

This sequence belongs to the TRAFAC class OBG-HflX-like GTPase superfamily. OBG GTPase family. As to quaternary structure, monomer. It depends on Mg(2+) as a cofactor.

The protein resides in the cytoplasm. Its function is as follows. An essential GTPase which binds GTP, GDP and possibly (p)ppGpp with moderate affinity, with high nucleotide exchange rates and a fairly low GTP hydrolysis rate. Plays a role in control of the cell cycle, stress response, ribosome biogenesis and in those bacteria that undergo differentiation, in morphogenesis control. This Thermotoga neapolitana (strain ATCC 49049 / DSM 4359 / NBRC 107923 / NS-E) protein is GTPase Obg.